We begin with the raw amino-acid sequence, 172 residues long: AIG2-like protein C (172 aa).

13–18 (YGSLQE) lines the substrate pocket. Residue E81 is the Proton acceptor of the active site.

This sequence belongs to the gamma-glutamylcyclotransferase family. As to expression, expressed in flowers, leaves, stems and roots.

In terms of biological role, putative gamma-glutamylcyclotransferase. This chain is AIG2-like protein C, found in Arabidopsis thaliana (Mouse-ear cress).